The sequence spans 148 residues: D-aminoacyl-tRNA deacylase (148 aa).

Residues Gly137–Pro138 carry the Gly-cisPro motif, important for rejection of L-amino acids motif.

Belongs to the DTD family. Homodimer.

It is found in the cytoplasm. It carries out the reaction glycyl-tRNA(Ala) + H2O = tRNA(Ala) + glycine + H(+). The catalysed reaction is a D-aminoacyl-tRNA + H2O = a tRNA + a D-alpha-amino acid + H(+). Functionally, an aminoacyl-tRNA editing enzyme that deacylates mischarged D-aminoacyl-tRNAs. Also deacylates mischarged glycyl-tRNA(Ala), protecting cells against glycine mischarging by AlaRS. Acts via tRNA-based rather than protein-based catalysis; rejects L-amino acids rather than detecting D-amino acids in the active site. By recycling D-aminoacyl-tRNA to D-amino acids and free tRNA molecules, this enzyme counteracts the toxicity associated with the formation of D-aminoacyl-tRNA entities in vivo and helps enforce protein L-homochirality. The sequence is that of D-aminoacyl-tRNA deacylase from Deinococcus geothermalis (strain DSM 11300 / CIP 105573 / AG-3a).